The following is a 269-amino-acid chain: MKPLNILISNDDGVFAAGIRALAKSAQKRGHKVKVVCPDQERSATGHGLTLQSPLRVEKADELFGEGIEAWGCSGTPADCVKLALSELLDNKPDLILSGINHGPNLGTDIFCSGTVAAAMEGTLENVPSMAISVASFKWKNFEAAGEIAMNIAEQAINDSWPASLLLNLNIPPCDKSKIKELSWTRLSVRKYKNQFSKREDPRGDDYYWLAGEVVLDLKSKGYGPKNWPSDVSQIQDNKISLTPVEPDLFWRGDLENLPKINNSFINPS.

Residues D11, D12, S43, and N101 each coordinate a divalent metal cation.

The protein belongs to the SurE nucleotidase family. It depends on a divalent metal cation as a cofactor.

The protein localises to the cytoplasm. The enzyme catalyses a ribonucleoside 5'-phosphate + H2O = a ribonucleoside + phosphate. Its function is as follows. Nucleotidase that shows phosphatase activity on nucleoside 5'-monophosphates. In Prochlorococcus marinus (strain AS9601), this protein is 5'-nucleotidase SurE.